The chain runs to 247 residues: 2,3-bisphosphoglycerate-dependent phosphoglycerate mutase (247 aa).

Residues 8–15 (RHGESQWN), 21–22 (TG), Arg60, 87–90 (ERHY), Lys98, 114–115 (RR), and 183–184 (GN) contribute to the substrate site. His9 acts as the Tele-phosphohistidine intermediate in catalysis. Glu87 serves as the catalytic Proton donor/acceptor.

The protein belongs to the phosphoglycerate mutase family. BPG-dependent PGAM subfamily.

It carries out the reaction (2R)-2-phosphoglycerate = (2R)-3-phosphoglycerate. The protein operates within carbohydrate degradation; glycolysis; pyruvate from D-glyceraldehyde 3-phosphate: step 3/5. In terms of biological role, catalyzes the interconversion of 2-phosphoglycerate and 3-phosphoglycerate. The polypeptide is 2,3-bisphosphoglycerate-dependent phosphoglycerate mutase (Chlorobium phaeobacteroides (strain BS1)).